The following is a 1050-amino-acid chain: Toluene efflux pump membrane transporter TtgB (1050 aa).

12 helical membrane passes run 10–30 (IFAWVIALVIMLVGALSILKL), 339–359 (GVIHTLIEAVVLVFLVMYLFL), 370–390 (MTVPVVLLGTFGILAAAGFSI), 393–413 (LTMFAMVLAIGLLVDDAIVVV), 440–460 (GALVGIALVLSAVLLPMAFFG), 472–492 (ITIVSAMGLSVLVALIFTPAL), 539–559 (VPFLLAYALIVVGMIWLFARI), 871–891 (MPALFALSVLFVFLCLAALYE), 893–913 (WSIPIAVVLVVPLGIIGALIA), 923–943 (VYFLVGLLTTIGLAAKNAILI), 972–992 (IIMTSLAFILGVVPLTIASGA), and 1004–1024 (VIGGMISATVLAIFWVPLFFV).

It belongs to the resistance-nodulation-cell division (RND) (TC 2.A.6) family.

Its subcellular location is the cell inner membrane. In terms of biological role, the inner membrane transporter component of a constitutive organic solvent efflux system. Involved in export of toluene, styrene, m-xylene, propylbenzene and ethylbenzene. Also exports AMP and the antibiotics carbenicillin, nalidixic acid, chloramphenicol and tetracycline. The polypeptide is Toluene efflux pump membrane transporter TtgB (ttgB) (Pseudomonas putida (strain DOT-T1E)).